The primary structure comprises 178 residues: Large ribosomal subunit protein uL6 (178 aa).

This sequence belongs to the universal ribosomal protein uL6 family. In terms of assembly, part of the 50S ribosomal subunit.

Its function is as follows. This protein binds to the 23S rRNA, and is important in its secondary structure. It is located near the subunit interface in the base of the L7/L12 stalk, and near the tRNA binding site of the peptidyltransferase center. The polypeptide is Large ribosomal subunit protein uL6 (Buchnera aphidicola subsp. Schizaphis graminum (strain Sg)).